The chain runs to 244 residues: Carboxy-S-adenosyl-L-methionine synthase (244 aa).

S-adenosyl-L-methionine is bound by residues Tyr-40, 65 to 67, 90 to 91, 119 to 120, Asn-134, and Arg-201; these read GCS, DN, and DL.

This sequence belongs to the class I-like SAM-binding methyltransferase superfamily. Cx-SAM synthase family. Homodimer.

The enzyme catalyses prephenate + S-adenosyl-L-methionine = carboxy-S-adenosyl-L-methionine + 3-phenylpyruvate + H2O. Its function is as follows. Catalyzes the conversion of S-adenosyl-L-methionine (SAM) to carboxy-S-adenosyl-L-methionine (Cx-SAM). In Geobacter metallireducens (strain ATCC 53774 / DSM 7210 / GS-15), this protein is Carboxy-S-adenosyl-L-methionine synthase.